The following is a 120-amino-acid chain: Small ribosomal subunit protein uS11 (120 aa).

The protein belongs to the universal ribosomal protein uS11 family. Part of the 30S ribosomal subunit. Interacts with proteins S7 and S18. Binds to IF-3.

Its function is as follows. Located on the platform of the 30S subunit, it bridges several disparate RNA helices of the 16S rRNA. Forms part of the Shine-Dalgarno cleft in the 70S ribosome. In Neorickettsia sennetsu (strain ATCC VR-367 / Miyayama) (Ehrlichia sennetsu), this protein is Small ribosomal subunit protein uS11.